Reading from the N-terminus, the 575-residue chain is Urease subunit alpha (575 aa).

The region spanning 137-575 (GGIDSHIHWI…LPMAQRYFLF (439 aa)) is the Urease domain. The Ni(2+) site is built by His142, His144, and Lys225. Lys225 carries the post-translational modification N6-carboxylysine. A substrate-binding site is contributed by His227. Residues His254 and His280 each coordinate Ni(2+). The active-site Proton donor is the His328. Position 368 (Asp368) interacts with Ni(2+).

The protein belongs to the metallo-dependent hydrolases superfamily. Urease alpha subunit family. In terms of assembly, heterotrimer of UreA (gamma), UreB (beta) and UreC (alpha) subunits. Three heterotrimers associate to form the active enzyme. Ni cation serves as cofactor. In terms of processing, carboxylation allows a single lysine to coordinate two nickel ions.

Its subcellular location is the cytoplasm. It carries out the reaction urea + 2 H2O + H(+) = hydrogencarbonate + 2 NH4(+). Its pathway is nitrogen metabolism; urea degradation; CO(2) and NH(3) from urea (urease route): step 1/1. This chain is Urease subunit alpha, found in Leptothrix cholodnii (strain ATCC 51168 / LMG 8142 / SP-6) (Leptothrix discophora (strain SP-6)).